The primary structure comprises 298 residues: Inosose dehydratase 2 (298 aa).

This sequence belongs to the IolE/MocC family. Requires glutathione as cofactor. Co(2+) serves as cofactor. Mn(2+) is required as a cofactor.

The enzyme catalyses scyllo-inosose = 3D-3,5/4-trihydroxycyclohexane-1,2-dione + H2O. Its pathway is polyol metabolism; myo-inositol degradation into acetyl-CoA; acetyl-CoA from myo-inositol: step 2/7. Functionally, catalyzes the dehydration of inosose (2-keto-myo-inositol, 2KMI or 2,4,6/3,5-pentahydroxycyclohexanone) to 3D-(3,5/4)-trihydroxycyclohexane-1,2-dione (D-2,3-diketo-4-deoxy-epi-inositol). This chain is Inosose dehydratase 2, found in Bacillus cereus (strain ZK / E33L).